The chain runs to 955 residues: 2-oxoglutarate dehydrogenase E1 component (955 aa).

It belongs to the alpha-ketoglutarate dehydrogenase family. As to quaternary structure, homodimer. Part of the 2-oxoglutarate dehydrogenase (OGDH) complex composed of E1 (2-oxoglutarate dehydrogenase), E2 (dihydrolipoamide succinyltransferase) and E3 (dihydrolipoamide dehydrogenase); the complex contains multiple copies of the three enzymatic components (E1, E2 and E3). The cofactor is thiamine diphosphate.

The enzyme catalyses N(6)-[(R)-lipoyl]-L-lysyl-[protein] + 2-oxoglutarate + H(+) = N(6)-[(R)-S(8)-succinyldihydrolipoyl]-L-lysyl-[protein] + CO2. Its function is as follows. E1 component of the 2-oxoglutarate dehydrogenase (OGDH) complex which catalyzes the decarboxylation of 2-oxoglutarate, the first step in the conversion of 2-oxoglutarate to succinyl-CoA and CO(2). This Bacillus anthracis (strain A0248) protein is 2-oxoglutarate dehydrogenase E1 component.